Consider the following 432-residue polypeptide: Meiotically up-regulated gene 134 protein (432 aa).

Belongs to the UPF0300 family.

Its subcellular location is the cytoplasm. The protein localises to the cell cortex. Functionally, has a role in meiosis. The sequence is that of Meiotically up-regulated gene 134 protein (mug134) from Schizosaccharomyces pombe (strain 972 / ATCC 24843) (Fission yeast).